The sequence spans 90 residues: Beta-microseminoprotein (90 aa).

Intrachain disulfides connect Cys-2/Cys-16, Cys-34/Cys-70, Cys-37/Cys-46, Cys-39/Cys-47, and Cys-61/Cys-84. Val-90 carries the valine amide modification.

This sequence belongs to the beta-microseminoprotein family.

It is found in the secreted. This Struthio camelus (Common ostrich) protein is Beta-microseminoprotein (MSMB).